Consider the following 362-residue polypeptide: NAD(P)H-quinone oxidoreductase subunit 1, chloroplastic (362 aa).

Transmembrane regions (helical) follow at residues 27-47 (IWIL…LVIV), 94-114 (IPLF…SFLV), 128-148 (IGVF…LMAG), 164-184 (AAQS…ISLL), 202-222 (FFGW…ISSL), 247-267 (YSGI…LVSS), 303-323 (TMSI…SITI), and 335-355 (LLNL…LLTT).

Belongs to the complex I subunit 1 family. NDH is composed of at least 16 different subunits, 5 of which are encoded in the nucleus.

It localises to the plastid. It is found in the chloroplast thylakoid membrane. The enzyme catalyses a plastoquinone + NADH + (n+1) H(+)(in) = a plastoquinol + NAD(+) + n H(+)(out). It catalyses the reaction a plastoquinone + NADPH + (n+1) H(+)(in) = a plastoquinol + NADP(+) + n H(+)(out). In terms of biological role, NDH shuttles electrons from NAD(P)H:plastoquinone, via FMN and iron-sulfur (Fe-S) centers, to quinones in the photosynthetic chain and possibly in a chloroplast respiratory chain. The immediate electron acceptor for the enzyme in this species is believed to be plastoquinone. Couples the redox reaction to proton translocation, and thus conserves the redox energy in a proton gradient. This Oryza sativa (Rice) protein is NAD(P)H-quinone oxidoreductase subunit 1, chloroplastic (ndhA).